The primary structure comprises 365 residues: Peptide chain release factor 2 (365 aa).

At glutamine 252 the chain carries N5-methylglutamine.

It belongs to the prokaryotic/mitochondrial release factor family. Methylated by PrmC. Methylation increases the termination efficiency of RF2.

It is found in the cytoplasm. Peptide chain release factor 2 directs the termination of translation in response to the peptide chain termination codons UGA and UAA. This Colwellia psychrerythraea (strain 34H / ATCC BAA-681) (Vibrio psychroerythus) protein is Peptide chain release factor 2.